The chain runs to 161 residues: Transcriptional repressor NrdR (161 aa).

Polar residues predominate over residues 1-11; the sequence is MRCPSCNSLDT. Residues 1 to 20 are disordered; sequence MRCPSCNSLDTQVKDSRPTE. Residues 3 to 34 fold into a zinc finger; sequence CPSCNSLDTQVKDSRPTEDSSVIRRRRVCVTC. The ATP-cone domain occupies 49–139; sequence LTVIKRNGRR…VYRNFREAKD (91 aa).

It belongs to the NrdR family. It depends on Zn(2+) as a cofactor.

Functionally, negatively regulates transcription of bacterial ribonucleotide reductase nrd genes and operons by binding to NrdR-boxes. The polypeptide is Transcriptional repressor NrdR (Bradyrhizobium sp. (strain BTAi1 / ATCC BAA-1182)).